The following is a 130-amino-acid chain: Osteocrin (130 aa).

The signal sequence occupies residues 1-25; the sequence is MLDWRLASTHFILAMIVMLWGSGKA. At R129 the chain carries Arginine amide.

This sequence belongs to the Osteocrin family. Interacts with NPR3. In terms of tissue distribution, expressed in skeletal muscle and to a much lesser extent in bone, brown adipose tissue, spleen and testis. Not expressed in neurons.

It localises to the secreted. Its function is as follows. Hormone that acts as a ligand for natriuretic peptide receptor NPR3/NPR-C and promotes bone growth and physical endurance in muscle. Acts as a regulator of osteoblast differentiation and bone growth by binding to natriuretic peptide receptor NPR3/NPR-C, thereby preventing binding between NPR3/NPR-C and natriuretic peptides, leading to increase cGMP production. Required to enhance physical endurance: induced following physical exercise in muscle and promotes cGMP production, probably by interacting with NPR3/NPR-C. May act as an autocrine and paracrine factor linked to glucose metabolism in skeletal muscle. This Mus musculus (Mouse) protein is Osteocrin.